The sequence spans 365 residues: Aminomethyltransferase (365 aa).

It belongs to the GcvT family. As to quaternary structure, the glycine cleavage system is composed of four proteins: P, T, L and H.

The enzyme catalyses N(6)-[(R)-S(8)-aminomethyldihydrolipoyl]-L-lysyl-[protein] + (6S)-5,6,7,8-tetrahydrofolate = N(6)-[(R)-dihydrolipoyl]-L-lysyl-[protein] + (6R)-5,10-methylene-5,6,7,8-tetrahydrofolate + NH4(+). In terms of biological role, the glycine cleavage system catalyzes the degradation of glycine. The polypeptide is Aminomethyltransferase (Yersinia pestis bv. Antiqua (strain Antiqua)).